Reading from the N-terminus, the 366-residue chain is Chorismate synthase (366 aa).

NADP(+) is bound at residue Arg48. FMN-binding positions include 125–127 (RSS), 238–239 (NA), Gly278, 293–297 (KPTSS), and Arg319.

It belongs to the chorismate synthase family. As to quaternary structure, homotetramer. FMNH2 serves as cofactor.

It carries out the reaction 5-O-(1-carboxyvinyl)-3-phosphoshikimate = chorismate + phosphate. Its pathway is metabolic intermediate biosynthesis; chorismate biosynthesis; chorismate from D-erythrose 4-phosphate and phosphoenolpyruvate: step 7/7. Its function is as follows. Catalyzes the anti-1,4-elimination of the C-3 phosphate and the C-6 proR hydrogen from 5-enolpyruvylshikimate-3-phosphate (EPSP) to yield chorismate, which is the branch point compound that serves as the starting substrate for the three terminal pathways of aromatic amino acid biosynthesis. This reaction introduces a second double bond into the aromatic ring system. The polypeptide is Chorismate synthase (Alkalilimnicola ehrlichii (strain ATCC BAA-1101 / DSM 17681 / MLHE-1)).